A 791-amino-acid polypeptide reads, in one-letter code: Sphingomyelin phosphodiesterase 4 (791 aa).

A helical transmembrane segment spans residues 755 to 775 (LFALLSFGLFSSTGLILIISF).

The cofactor is Mg(2+).

It is found in the endoplasmic reticulum membrane. Its subcellular location is the golgi apparatus membrane. The protein localises to the nucleus envelope. The protein resides in the cell membrane. It localises to the sarcolemma. The enzyme catalyses a sphingomyelin + H2O = phosphocholine + an N-acylsphing-4-enine + H(+). Catalyzes the hydrolysis of membrane sphingomyelin to form phosphorylcholine and ceramide. It has a relevant role in the homeostasis of membrane sphingolipids, thereby influencing membrane integrity, and endoplasmic reticulum organization and function. May sensitize cells to DNA damage-induced apoptosis. This is Sphingomyelin phosphodiesterase 4 (smpd4) from Danio rerio (Zebrafish).